Consider the following 122-residue polypeptide: Large ribosomal subunit protein uL14 (122 aa).

This sequence belongs to the universal ribosomal protein uL14 family. Part of the 50S ribosomal subunit. Forms a cluster with proteins L3 and L19. In the 70S ribosome, L14 and L19 interact and together make contacts with the 16S rRNA in bridges B5 and B8.

Binds to 23S rRNA. Forms part of two intersubunit bridges in the 70S ribosome. The polypeptide is Large ribosomal subunit protein uL14 (Alkaliphilus metalliredigens (strain QYMF)).